The sequence spans 258 residues: Small ribosomal subunit protein uS2 (258 aa).

This sequence belongs to the universal ribosomal protein uS2 family.

This Granulibacter bethesdensis (strain ATCC BAA-1260 / CGDNIH1) protein is Small ribosomal subunit protein uS2.